We begin with the raw amino-acid sequence, 253 residues long: MRILVTNDDGIHAPGLKVLEEIARELSDDVWVVAPETDQSGVSHSLSLNDPLRLRRVAETRFAVKGTPSDCVIMGVRHILKERGPDLVLSGVNRGQNVAEDVTYSGTVAGAMEGTILGVRSIALSQAYGVGGRANVKWHTAAEHGARTIRRILEAGIEPGILVNVNFPDCEPEAVEGIAVVAQGMRNQQLLAIDERLDGRGNPYFWLAFAKARFEPGHGTDLKAIAENRIAVTPLRLDLTDEPTLTRFAQVFG.

Residues Asp8, Asp9, Ser40, and Asn93 each contribute to the a divalent metal cation site.

It belongs to the SurE nucleotidase family. Requires a divalent metal cation as cofactor.

It localises to the cytoplasm. The catalysed reaction is a ribonucleoside 5'-phosphate + H2O = a ribonucleoside + phosphate. Functionally, nucleotidase that shows phosphatase activity on nucleoside 5'-monophosphates. This chain is 5'-nucleotidase SurE, found in Methylobacterium nodulans (strain LMG 21967 / CNCM I-2342 / ORS 2060).